Here is a 326-residue protein sequence, read N- to C-terminus: MAEAISAALPTRDQVVPSRKRVKLPPWLEVAKPRLIPLLLATTLGGMALTEGWPLSSPRLVCTLGGGALASAAAGVLNCLWEQDLDGRMARTSGRALPSGRLSPTSAFIGAIACTLAAAMLLVSGVNCLAAGLSLLGLCSYVLLYTALLKPRTTQNIVIGGVAGAIPPLVGAAAATGHVGLGGWWLFALVMVWTPAHFWALALLLREDYRAVGIPMLPVVKGPVVTARAIRRYGWATVLLSGFGVLALPTGGVFYGLILLPFNGRLIQMVQRLSMDPDSLMAAKGLFRWSILYLFGICLLLILSRTDLASSFDQQVMFVLQQLPIV.

Transmembrane regions (helical) follow at residues Leu35–Leu55, Leu60–Leu80, Ser106–Val126, Leu129–Leu149, Ile157–Gly177, Trp185–Leu205, Gly242–Phe262, and Ala283–Leu303.

This sequence belongs to the UbiA prenyltransferase family. Protoheme IX farnesyltransferase subfamily.

The protein localises to the cell inner membrane. The catalysed reaction is heme b + (2E,6E)-farnesyl diphosphate + H2O = Fe(II)-heme o + diphosphate. The protein operates within porphyrin-containing compound metabolism; heme O biosynthesis; heme O from protoheme: step 1/1. Converts heme B (protoheme IX) to heme O by substitution of the vinyl group on carbon 2 of heme B porphyrin ring with a hydroxyethyl farnesyl side group. This chain is Protoheme IX farnesyltransferase, found in Parasynechococcus marenigrum (strain WH8102).